A 175-amino-acid chain; its full sequence is MDPSVKKDEIYYTILNIIQNYFIEYCTGKNRNFHVEDENTYIIVKNMCDIILRDNIVEFRKDIDRCSDIENEIPEIVYDTIHDKITWGRVISIIAFGAYVTKVFKEKGRDNVVDLMPDIITESLLSRCRSWLSDQNCWDGLKAYVYNNKKFYYVTRYFRVAAFIITSLAVINLFL.

The helical transmembrane segment at 152–174 threads the bilayer; the sequence is YYVTRYFRVAAFIITSLAVINLF.

Interacts with host BAK1 and BAX as well as other BH3-containing proteins including BIM, BID or PUMA.

The protein localises to the host membrane. In terms of biological role, plays a role in the inhibition of host apoptosis. Interacts with host proapoptotic factors BAK1 and BAX to supposedly prevent their activation. The protein is Apoptosis regulator Bcl-2 homolog (CNPV058) of Canarypox virus (CNPV).